We begin with the raw amino-acid sequence, 904 residues long: Leucine--tRNA ligase (904 aa).

A 'HIGH' region motif is present at residues 49-59; sequence PYPSGDLHIGH. Positions 663 to 667 match the 'KMSKS' region motif; it reads TMSKS. Lys666 contributes to the ATP binding site.

This sequence belongs to the class-I aminoacyl-tRNA synthetase family.

It is found in the cytoplasm. It carries out the reaction tRNA(Leu) + L-leucine + ATP = L-leucyl-tRNA(Leu) + AMP + diphosphate. The protein is Leucine--tRNA ligase of Roseiflexus castenholzii (strain DSM 13941 / HLO8).